A 453-amino-acid polypeptide reads, in one-letter code: Alpha-glucosidase (453 aa).

3 to 69 (TKIVLVGAGS…LPFIVSATTD (67 aa)) contacts NAD(+). Asn-149 contacts substrate. A Mn(2+)-binding site is contributed by Cys-171. Catalysis depends on His-172, which acts as the Proton donor. His-201 contributes to the Mn(2+) binding site.

Homotetramer. Mn(2+) is required as a cofactor. Requires Co(2+) as cofactor. It depends on Ca(2+) as a cofactor. Fe(2+) serves as cofactor. The cofactor is Mg(2+). Sr(2+) is required as a cofactor. Requires Ni(2+) as cofactor. It depends on NAD(+) as a cofactor.

The enzyme catalyses Hydrolysis of terminal, non-reducing (1-&gt;4)-linked alpha-D-glucose residues with release of alpha-D-glucose.. It functions in the pathway glycan degradation; palatinose degradation. Is inhibited by EDTA in vitro. Its function is as follows. Alpha-glucosidase with broad specificity. Hydrolyzes maltose, palatinose, maltulose, trehalose, trehalulose, turanose, leucrose, sucrose and maltitol. Is not active against alpha-galactosides, e.g. melibiose, and alpha-mannosides. Shows an obligate requirement for an O-alpha-glycosidic linkage, since it is not able to cleave beta-glycosidic bonds (cellobiose, gentiobiose, lactose, sophorose or laminaribiose). Cannot hydrolyze phosphorylated alpha-glucosides derivatives. Seems to be involved in the degradation of palatinose, a sucrose isomer that is formed as a reserve material under conditions of excess carbon availability, sequestered in a form unavailable to competitors such as fungi or the host plant, and whose consumption appears to be postponed until the preferentially metabolized carbon source (e.g. sucrose) is depleted. The protein is Alpha-glucosidase (palH) of Erwinia rhapontici (Pectobacterium rhapontici).